A 519-amino-acid polypeptide reads, in one-letter code: Cytochrome P450 52A13 (519 aa).

Heme is bound at residue cysteine 466.

The protein belongs to the cytochrome P450 family. Heme serves as cofactor.

It is found in the membrane. Together with an NADPH cytochrome P450 the enzyme system catalyzes the terminal hydroxylation as the first step in the assimilation of alkanes and fatty acids. This chain is Cytochrome P450 52A13 (CYP52A13), found in Debaryomyces hansenii (Yeast).